Reading from the N-terminus, the 545-residue chain is CTP synthase (545 aa).

Positions 1 to 266 are amidoligase domain; it reads MATNYIFVTG…DTFVCDRFRL (266 aa). CTP is bound at residue serine 14. Serine 14 contributes to the UTP binding site. ATP is bound by residues 15–20 and aspartate 72; that span reads SLGKGI. Mg(2+) contacts are provided by aspartate 72 and glutamate 140. Residues 147–149, 187–192, and lysine 223 contribute to the CTP site; these read DIE and KTKPTQ. UTP-binding positions include 187–192 and lysine 223; that span reads KTKPTQ. 239-241 contacts ATP; sequence KDV. Residues 291-542 enclose the Glutamine amidotransferase type-1 domain; the sequence is TIGMVGKYVE…VAAAKAYQDS (252 aa). Glycine 352 provides a ligand contact to L-glutamine. Cysteine 379 serves as the catalytic Nucleophile; for glutamine hydrolysis. L-glutamine contacts are provided by residues 380 to 383, glutamate 403, and arginine 470; that span reads LGMQ. Catalysis depends on residues histidine 515 and glutamate 517.

This sequence belongs to the CTP synthase family. In terms of assembly, homotetramer.

The enzyme catalyses UTP + L-glutamine + ATP + H2O = CTP + L-glutamate + ADP + phosphate + 2 H(+). It catalyses the reaction L-glutamine + H2O = L-glutamate + NH4(+). It carries out the reaction UTP + NH4(+) + ATP = CTP + ADP + phosphate + 2 H(+). It participates in pyrimidine metabolism; CTP biosynthesis via de novo pathway; CTP from UDP: step 2/2. With respect to regulation, allosterically activated by GTP, when glutamine is the substrate; GTP has no effect on the reaction when ammonia is the substrate. The allosteric effector GTP functions by stabilizing the protein conformation that binds the tetrahedral intermediate(s) formed during glutamine hydrolysis. Inhibited by the product CTP, via allosteric rather than competitive inhibition. Its function is as follows. Catalyzes the ATP-dependent amination of UTP to CTP with either L-glutamine or ammonia as the source of nitrogen. Regulates intracellular CTP levels through interactions with the four ribonucleotide triphosphates. This Actinobacillus pleuropneumoniae serotype 5b (strain L20) protein is CTP synthase.